The primary structure comprises 70 residues: Putative membrane protein insertion efficiency factor (70 aa).

This sequence belongs to the UPF0161 family.

It is found in the cell membrane. Its function is as follows. Could be involved in insertion of integral membrane proteins into the membrane. The chain is Putative membrane protein insertion efficiency factor from Symbiobacterium thermophilum (strain DSM 24528 / JCM 14929 / IAM 14863 / T).